A 270-amino-acid chain; its full sequence is Tryptophan synthase alpha chain (270 aa).

Catalysis depends on proton acceptor residues glutamate 57 and aspartate 68.

The protein belongs to the TrpA family. In terms of assembly, tetramer of two alpha and two beta chains.

It catalyses the reaction (1S,2R)-1-C-(indol-3-yl)glycerol 3-phosphate + L-serine = D-glyceraldehyde 3-phosphate + L-tryptophan + H2O. It participates in amino-acid biosynthesis; L-tryptophan biosynthesis; L-tryptophan from chorismate: step 5/5. Its function is as follows. The alpha subunit is responsible for the aldol cleavage of indoleglycerol phosphate to indole and glyceraldehyde 3-phosphate. This chain is Tryptophan synthase alpha chain, found in Mycobacterium leprae (strain Br4923).